We begin with the raw amino-acid sequence, 361 residues long: Phospho-N-acetylmuramoyl-pentapeptide-transferase (361 aa).

10 helical membrane passes run 27-47 (GAMVTGALFVFLFGPWIIDHL), 72-92 (TPTMGGLMILSGLVVSTLLWA), 94-114 (LHNPYVWVVLMVTLGFGFVGF), 133-153 (LRLAVEGLIALFACLVIIWAG), 169-189 (FAINLGWFYLVFGAFIIVGAG), 200-220 (GLAIVPVMIAAASFGMIAYLV), 240-260 (LAVLCGAVLGAGLGFLWFNAP), 264-284 (IFMGDTGSLALGGMIGSIAVA), 289-309 (IVLAVIGGLFVFEALSVIVQV), and 338-358 (QIVIRFWIIAVMLALAGLSTL).

Belongs to the glycosyltransferase 4 family. MraY subfamily. Requires Mg(2+) as cofactor.

Its subcellular location is the cell inner membrane. The enzyme catalyses UDP-N-acetyl-alpha-D-muramoyl-L-alanyl-gamma-D-glutamyl-meso-2,6-diaminopimeloyl-D-alanyl-D-alanine + di-trans,octa-cis-undecaprenyl phosphate = di-trans,octa-cis-undecaprenyl diphospho-N-acetyl-alpha-D-muramoyl-L-alanyl-D-glutamyl-meso-2,6-diaminopimeloyl-D-alanyl-D-alanine + UMP. It participates in cell wall biogenesis; peptidoglycan biosynthesis. Its function is as follows. Catalyzes the initial step of the lipid cycle reactions in the biosynthesis of the cell wall peptidoglycan: transfers peptidoglycan precursor phospho-MurNAc-pentapeptide from UDP-MurNAc-pentapeptide onto the lipid carrier undecaprenyl phosphate, yielding undecaprenyl-pyrophosphoryl-MurNAc-pentapeptide, known as lipid I. This is Phospho-N-acetylmuramoyl-pentapeptide-transferase from Afipia carboxidovorans (strain ATCC 49405 / DSM 1227 / KCTC 32145 / OM5) (Oligotropha carboxidovorans).